The primary structure comprises 460 residues: Bifunctional protein GlmU (460 aa).

The segment at 1–235 (MALSAAIVLA…PLTVEGVNDR (235 aa)) is pyrophosphorylase. Residues 9–12 (LAAG), Lys23, Gln76, and 81–82 (GT) each bind UDP-N-acetyl-alpha-D-glucosamine. A Mg(2+)-binding site is contributed by Asp109. Positions 146, 161, 176, and 233 each coordinate UDP-N-acetyl-alpha-D-glucosamine. Asn233 serves as a coordination point for Mg(2+). Positions 236–256 (VQLAALSKTYNRRVCERWMRD) are linker. The tract at residues 257-460 (GVTILDPETT…VEGWKPAWER (204 aa)) is N-acetyltransferase. Arg338 and Lys356 together coordinate UDP-N-acetyl-alpha-D-glucosamine. His368 serves as the catalytic Proton acceptor. UDP-N-acetyl-alpha-D-glucosamine is bound by residues Tyr371 and Asn382. Acetyl-CoA-binding positions include 391–392 (NY) and Ala428.

It in the N-terminal section; belongs to the N-acetylglucosamine-1-phosphate uridyltransferase family. The protein in the C-terminal section; belongs to the transferase hexapeptide repeat family. Homotrimer. Mg(2+) is required as a cofactor.

The protein resides in the cytoplasm. It carries out the reaction alpha-D-glucosamine 1-phosphate + acetyl-CoA = N-acetyl-alpha-D-glucosamine 1-phosphate + CoA + H(+). The catalysed reaction is N-acetyl-alpha-D-glucosamine 1-phosphate + UTP + H(+) = UDP-N-acetyl-alpha-D-glucosamine + diphosphate. The protein operates within nucleotide-sugar biosynthesis; UDP-N-acetyl-alpha-D-glucosamine biosynthesis; N-acetyl-alpha-D-glucosamine 1-phosphate from alpha-D-glucosamine 6-phosphate (route II): step 2/2. It functions in the pathway nucleotide-sugar biosynthesis; UDP-N-acetyl-alpha-D-glucosamine biosynthesis; UDP-N-acetyl-alpha-D-glucosamine from N-acetyl-alpha-D-glucosamine 1-phosphate: step 1/1. It participates in bacterial outer membrane biogenesis; LPS lipid A biosynthesis. Its function is as follows. Catalyzes the last two sequential reactions in the de novo biosynthetic pathway for UDP-N-acetylglucosamine (UDP-GlcNAc). The C-terminal domain catalyzes the transfer of acetyl group from acetyl coenzyme A to glucosamine-1-phosphate (GlcN-1-P) to produce N-acetylglucosamine-1-phosphate (GlcNAc-1-P), which is converted into UDP-GlcNAc by the transfer of uridine 5-monophosphate (from uridine 5-triphosphate), a reaction catalyzed by the N-terminal domain. This chain is Bifunctional protein GlmU, found in Bifidobacterium longum (strain DJO10A).